The chain runs to 432 residues: Eukaryotic translation initiation factor 3 subunit E (432 aa).

The PCI domain occupies 221–401; sequence VYYNYPKGRD…MGVKSVSIHE (181 aa).

The protein belongs to the eIF-3 subunit E family. As to quaternary structure, component of the eukaryotic translation initiation factor 3 (eIF-3) complex.

The protein resides in the cytoplasm. In terms of biological role, component of the eukaryotic translation initiation factor 3 (eIF-3) complex, which is involved in protein synthesis of a specialized repertoire of mRNAs and, together with other initiation factors, stimulates binding of mRNA and methionyl-tRNAi to the 40S ribosome. The eIF-3 complex specifically targets and initiates translation of a subset of mRNAs involved in cell proliferation. In Caenorhabditis elegans, this protein is Eukaryotic translation initiation factor 3 subunit E.